The chain runs to 265 residues: 5'-nucleotidase SurE (265 aa).

Asp-9, Asp-10, Ser-40, and Asn-96 together coordinate a divalent metal cation.

The protein belongs to the SurE nucleotidase family. Requires a divalent metal cation as cofactor.

It localises to the cytoplasm. It catalyses the reaction a ribonucleoside 5'-phosphate + H2O = a ribonucleoside + phosphate. Nucleotidase that shows phosphatase activity on nucleoside 5'-monophosphates. This is 5'-nucleotidase SurE from Methanothrix thermoacetophila (strain DSM 6194 / JCM 14653 / NBRC 101360 / PT) (Methanosaeta thermophila).